The sequence spans 222 residues: N-(5'-phosphoribosyl)anthranilate isomerase (222 aa).

Belongs to the TrpF family.

It carries out the reaction N-(5-phospho-beta-D-ribosyl)anthranilate = 1-(2-carboxyphenylamino)-1-deoxy-D-ribulose 5-phosphate. The protein operates within amino-acid biosynthesis; L-tryptophan biosynthesis; L-tryptophan from chorismate: step 3/5. This Brevibacillus brevis (strain 47 / JCM 6285 / NBRC 100599) protein is N-(5'-phosphoribosyl)anthranilate isomerase.